Reading from the N-terminus, the 384-residue chain is Spermatogenesis-associated protein 32 (384 aa).

Residues 23–60 (RDDLSQHQIQEEQELEADMLEQKPQLQVDLDLDPDPDP) form a disordered region. A phosphoserine mark is found at Ser-167 and Ser-170. 3 disordered regions span residues 211 to 232 (DAHSAPPTTSSQAPSPLLSSDL), 284 to 310 (VEEREPENHAETLPEKPREARAPLKSW), and 340 to 366 (LLQPPATSPLLQGSKEDSVPPGKEKEN). Low complexity predominate over residues 214–231 (SAPPTTSSQAPSPLLSSD). The segment covering 353 to 366 (SKEDSVPPGKEKEN) has biased composition (basic and acidic residues).

As to quaternary structure, interacts with syntaxin-1 and ACTB. In terms of tissue distribution, detected in testis, and on the acrosomal cap of spermatids.

In Homo sapiens (Human), this protein is Spermatogenesis-associated protein 32 (SPATA32).